Here is a 309-residue protein sequence, read N- to C-terminus: MEVTGTPSSYSNRNCTIENFKKEFYPIIYLIIFFWGALGNGFSIYVFLQTCKKSTSVNVFMLNLATSDFLFISTLPFRADYYFRGSNWIFGDLACRVMSYSLYVNMYTSIYFLTVLSVVRFLATVHPFRMFHVTSVRSAWILCGIIWVFIMASSALLLVNGQEEKDNIISCLELSPQKFKSLLIMNHIAVAVGFLLPFLTLTVCYLLIIRILLKAEIPESGPRAAHRKALTTIVIAMITFLLCFLPYHALRTLHLVTWDKDSCGDVLHKATVITLTMAAANSCFNPFLYYFAGENFKARLRAIFSKVHL.

The Extracellular segment spans residues methionine 1 to proline 26. A glycan (N-linked (GlcNAc...) asparagine) is linked at asparagine 14. The helical transmembrane segment at isoleucine 27–phenylalanine 47 threads the bilayer. The Cytoplasmic segment spans residues leucine 48–serine 56. The chain crosses the membrane as a helical span at residues valine 57–phenylalanine 77. The Extracellular segment spans residues arginine 78–methionine 98. Residues cysteine 95 and cysteine 171 are joined by a disulfide bond. Residues serine 99–valine 119 form a helical membrane-spanning segment. The Cytoplasmic portion of the chain corresponds to arginine 120–serine 138. The helical transmembrane segment at alanine 139–valine 159 threads the bilayer. Over asparagine 160–histidine 187 the chain is Extracellular. The chain crosses the membrane as a helical span at residues isoleucine 188 to isoleucine 208. Topologically, residues isoleucine 209 to alanine 229 are cytoplasmic. The helical transmembrane segment at leucine 230–leucine 250 threads the bilayer. Topologically, residues arginine 251–threonine 271 are extracellular. The helical transmembrane segment at valine 272 to alanine 292 threads the bilayer. The Cytoplasmic segment spans residues glycine 293–leucine 309.

It belongs to the G-protein coupled receptor 1 family. As to expression, widely expressed at low levels, with highest expression in the spleen, thymus and adrenal gland, and lower in the kidney, brain and peripheral blood leukocytes.

It localises to the cell membrane. In terms of biological role, receptor for cysteinyl leukotrienes. The response is mediated via a G-protein that activates a phosphatidylinositol-calcium second messenger system. The rank order of affinities for the leukotrienes is LTC4 = LTD4 &gt;&gt; LTE4. The protein is Cysteinyl leukotriene receptor 2 (Cysltr2) of Mus musculus (Mouse).